The chain runs to 253 residues: 5'/3'-nucleotidase SurE (253 aa).

A divalent metal cation-binding residues include Asp8, Asp9, Ser39, and Asn92.

It belongs to the SurE nucleotidase family. Requires a divalent metal cation as cofactor.

It localises to the cytoplasm. The catalysed reaction is a ribonucleoside 5'-phosphate + H2O = a ribonucleoside + phosphate. The enzyme catalyses a ribonucleoside 3'-phosphate + H2O = a ribonucleoside + phosphate. It carries out the reaction [phosphate](n) + H2O = [phosphate](n-1) + phosphate + H(+). Functionally, nucleotidase with a broad substrate specificity as it can dephosphorylate various ribo- and deoxyribonucleoside 5'-monophosphates and ribonucleoside 3'-monophosphates with highest affinity to 3'-AMP. Also hydrolyzes polyphosphate (exopolyphosphatase activity) with the preference for short-chain-length substrates (P20-25). Might be involved in the regulation of dNTP and NTP pools, and in the turnover of 3'-mononucleotides produced by numerous intracellular RNases (T1, T2, and F) during the degradation of various RNAs. This is 5'/3'-nucleotidase SurE from Klebsiella pneumoniae (strain 342).